The sequence spans 394 residues: Uroporphyrinogen decarboxylase 2, chloroplastic (394 aa).

Residues 74–78 (RQAGR), Phe93, Ser123, Asp124, Tyr201, Ser256, and His371 contribute to the substrate site.

The protein belongs to the uroporphyrinogen decarboxylase family. As to quaternary structure, homodimer.

The protein resides in the plastid. It is found in the chloroplast. It catalyses the reaction uroporphyrinogen III + 4 H(+) = coproporphyrinogen III + 4 CO2. Its pathway is porphyrin-containing compound metabolism; protoporphyrin-IX biosynthesis; coproporphyrinogen-III from 5-aminolevulinate: step 4/4. It participates in porphyrin-containing compound metabolism; chlorophyll biosynthesis. Catalyzes the decarboxylation of four acetate groups of uroporphyrinogen-III to yield coproporphyrinogen-III. This chain is Uroporphyrinogen decarboxylase 2, chloroplastic (HEME2), found in Arabidopsis thaliana (Mouse-ear cress).